The chain runs to 290 residues: 4-hydroxybenzoate octaprenyltransferase (290 aa).

6 consecutive transmembrane segments (helical) span residues 33-53 (LWAL…AVFV), 99-119 (LFVI…VKTI), 141-161 (LPQV…FCAV), 213-233 (LIIG…GWLN), 234-254 (GLGA…IWQQ), and 268-288 (AFLN…LSYL).

It belongs to the UbiA prenyltransferase family. Requires Mg(2+) as cofactor.

It is found in the cell inner membrane. The enzyme catalyses all-trans-octaprenyl diphosphate + 4-hydroxybenzoate = 4-hydroxy-3-(all-trans-octaprenyl)benzoate + diphosphate. It functions in the pathway cofactor biosynthesis; ubiquinone biosynthesis. Catalyzes the prenylation of para-hydroxybenzoate (PHB) with an all-trans polyprenyl group. Mediates the second step in the final reaction sequence of ubiquinone-8 (UQ-8) biosynthesis, which is the condensation of the polyisoprenoid side chain with PHB, generating the first membrane-bound Q intermediate 3-octaprenyl-4-hydroxybenzoate. This Cronobacter sakazakii (strain ATCC BAA-894) (Enterobacter sakazakii) protein is 4-hydroxybenzoate octaprenyltransferase.